The chain runs to 115 residues: Virion-associated protein (115 aa).

Coiled-coil stretches lie at residues 1 to 28 and 33 to 54; these read MAAT…MLER and KPTG…KIDQ. A compositionally biased stretch (polar residues) spans 96-106; sequence GNEELGSSGNP. The segment at 96-115 is disordered; it reads GNEELGSSGNPNAVKWPPRK.

Belongs to the caulimovirus ORF III family. In terms of assembly, homotetramer, through coiled-coil domain. Homotrimer when interacts with icosehadral capsid. Interacts with capsid protein, and with Movement protein.

The protein resides in the virion. The protein localises to the host cell junction. It is found in the host plasmodesma. Its function is as follows. Plays a role in virus cell-to-cell and plant-to-plant transmission. Interacts with virion icosahedral capsid and movement protein, thereby facilitating virion cell-to-cell transmission through plasmodesmata opened by viral movement protein. Also interacts with aphid transmission factor, attaching the virion to aphid stylet when the animal feeds on an virus infected plant. Aphid saliva may later detach the virion, inducing release of infectious particles when the animal feeds on a new plant. The protein is Virion-associated protein of Scrophularia californica (California bee plant).